Reading from the N-terminus, the 291-residue chain is Lipoyl synthase (291 aa).

[4Fe-4S] cluster is bound by residues Cys33, Cys38, Cys44, Cys59, Cys63, Cys66, and Ser274. One can recognise a Radical SAM core domain in the interval 45-263 (WGEGTATFLI…REAAEAMGFK (219 aa)).

Belongs to the radical SAM superfamily. Lipoyl synthase family. The cofactor is [4Fe-4S] cluster.

The protein resides in the cytoplasm. The enzyme catalyses [[Fe-S] cluster scaffold protein carrying a second [4Fe-4S](2+) cluster] + N(6)-octanoyl-L-lysyl-[protein] + 2 oxidized [2Fe-2S]-[ferredoxin] + 2 S-adenosyl-L-methionine + 4 H(+) = [[Fe-S] cluster scaffold protein] + N(6)-[(R)-dihydrolipoyl]-L-lysyl-[protein] + 4 Fe(3+) + 2 hydrogen sulfide + 2 5'-deoxyadenosine + 2 L-methionine + 2 reduced [2Fe-2S]-[ferredoxin]. The protein operates within protein modification; protein lipoylation via endogenous pathway; protein N(6)-(lipoyl)lysine from octanoyl-[acyl-carrier-protein]: step 2/2. Its function is as follows. Catalyzes the radical-mediated insertion of two sulfur atoms into the C-6 and C-8 positions of the octanoyl moiety bound to the lipoyl domains of lipoate-dependent enzymes, thereby converting the octanoylated domains into lipoylated derivatives. The protein is Lipoyl synthase of Pyrobaculum calidifontis (strain DSM 21063 / JCM 11548 / VA1).